The chain runs to 825 residues: Taste receptor cell protein 1 (825 aa).

A signal peptide spans 1-21 (MDKQWFPAAGILLAALLVVSA). Disordered regions lie at residues 66–97 (EREPEALGRRAGGLSTEGAGGQESPSMPGPSG) and 299–322 (TSPSQASSLHSPRPSSASPLSASP). The span at 302-322 (SQASSLHSPRPSSASPLSASP) shows a compositional bias: low complexity.

As to expression, expression is restricted to circumvallate papillae.

This chain is Taste receptor cell protein 1 (Trcg1), found in Mus musculus (Mouse).